We begin with the raw amino-acid sequence, 295 residues long: Pyridoxal 5'-phosphate synthase subunit PdxS (295 aa).

A D-ribose 5-phosphate-binding site is contributed by aspartate 25. The Schiff-base intermediate with D-ribose 5-phosphate role is filled by lysine 82. A D-ribose 5-phosphate-binding site is contributed by glycine 154. Arginine 166 contacts D-glyceraldehyde 3-phosphate. Residues glycine 215 and 236–237 each bind D-ribose 5-phosphate; that span reads GS.

It belongs to the PdxS/SNZ family. In terms of assembly, in the presence of PdxT, forms a dodecamer of heterodimers.

It catalyses the reaction aldehydo-D-ribose 5-phosphate + D-glyceraldehyde 3-phosphate + L-glutamine = pyridoxal 5'-phosphate + L-glutamate + phosphate + 3 H2O + H(+). It participates in cofactor biosynthesis; pyridoxal 5'-phosphate biosynthesis. Catalyzes the formation of pyridoxal 5'-phosphate from ribose 5-phosphate (RBP), glyceraldehyde 3-phosphate (G3P) and ammonia. The ammonia is provided by the PdxT subunit. Can also use ribulose 5-phosphate and dihydroxyacetone phosphate as substrates, resulting from enzyme-catalyzed isomerization of RBP and G3P, respectively. The polypeptide is Pyridoxal 5'-phosphate synthase subunit PdxS (Actinobacillus pleuropneumoniae serotype 5b (strain L20)).